The chain runs to 459 residues: tRNA modification GTPase MnmE (459 aa).

(6S)-5-formyl-5,6,7,8-tetrahydrofolate is bound by residues R22, E85, and R124. In terms of domain architecture, TrmE-type G spans 221–380; sequence GLSTVIVGKP…LEIQIRDLFF (160 aa). Position 231 (N231) interacts with K(+). GTP contacts are provided by residues 231 to 236, 250 to 256, and 275 to 278; these read NVGKSS, TEVAGTT, and DTAG. S235 is a Mg(2+) binding site. Residues T250, V252, and T255 each coordinate K(+). T256 serves as a coordination point for Mg(2+). K459 contributes to the (6S)-5-formyl-5,6,7,8-tetrahydrofolate binding site.

It belongs to the TRAFAC class TrmE-Era-EngA-EngB-Septin-like GTPase superfamily. TrmE GTPase family. As to quaternary structure, homodimer. Heterotetramer of two MnmE and two MnmG subunits. Requires K(+) as cofactor.

The protein localises to the cytoplasm. Functionally, exhibits a very high intrinsic GTPase hydrolysis rate. Involved in the addition of a carboxymethylaminomethyl (cmnm) group at the wobble position (U34) of certain tRNAs, forming tRNA-cmnm(5)s(2)U34. The sequence is that of tRNA modification GTPase MnmE from Staphylococcus aureus (strain MSSA476).